We begin with the raw amino-acid sequence, 171 residues long: Small ribosomal subunit protein uS4 (171 aa).

An S4 RNA-binding domain is found at arginine 104–alanine 168.

The protein belongs to the universal ribosomal protein uS4 family. In terms of assembly, part of the 30S ribosomal subunit. Contacts protein S5. The interaction surface between S4 and S5 is involved in control of translational fidelity.

Its function is as follows. One of the primary rRNA binding proteins, it binds directly to 16S rRNA where it nucleates assembly of the body of the 30S subunit. Functionally, with S5 and S12 plays an important role in translational accuracy. This is Small ribosomal subunit protein uS4 from Aeropyrum pernix (strain ATCC 700893 / DSM 11879 / JCM 9820 / NBRC 100138 / K1).